The following is a 317-amino-acid chain: tRNA dimethylallyltransferase (317 aa).

19 to 26 (GPTASGKS) is a binding site for ATP. 21-26 (TASGKS) lines the substrate pocket. Residues 44 to 47 (DSMQ) are interaction with substrate tRNA.

Belongs to the IPP transferase family. Monomer. The cofactor is Mg(2+).

It carries out the reaction adenosine(37) in tRNA + dimethylallyl diphosphate = N(6)-dimethylallyladenosine(37) in tRNA + diphosphate. In terms of biological role, catalyzes the transfer of a dimethylallyl group onto the adenine at position 37 in tRNAs that read codons beginning with uridine, leading to the formation of N6-(dimethylallyl)adenosine (i(6)A). The sequence is that of tRNA dimethylallyltransferase from Methylorubrum populi (strain ATCC BAA-705 / NCIMB 13946 / BJ001) (Methylobacterium populi).